A 66-amino-acid polypeptide reads, in one-letter code: MRSLYLSFSLTIIFVLVIMHAEAKAISEPNAIAEADPRFLNILKTIGKILLPIIPTVAEKIKEKVG.

Residues 1-25 form the signal peptide; sequence MRSLYLSFSLTIIFVLVIMHAEAKA. A propeptide spanning residues 26-37 is cleaved from the precursor; sequence ISEPNAIAEADP. The residue at position 65 (Val-65) is a Valine amide.

It belongs to the formicidae venom clade 3 family. Expressed by the venom gland.

Its subcellular location is the secreted. Toxin that causes a rapid and irreversible paralysis when intrathoracically injected into insects (blowflies). Does not cause spontaneous nocifensive behaviors by intraplantar injection in mice. Exhibits hemolytic and cytotoxic activities on HEK293 cells. In Pogonomyrmex rugosus (Desert harvester ant), this protein is Myrmicitoxin(1)-Pr5a.